We begin with the raw amino-acid sequence, 685 residues long: Linoleate 9/13-lipoxygenase (685 aa).

The first 19 residues, 1 to 19 (MKRRSVLLSGVALSGTALA), serve as a signal peptide directing secretion. In terms of domain architecture, Lipoxygenase spans 122 to 685 (ASLPASAAAQ…PSRIPASTNI (564 aa)). Fe cation is bound by residues His-377, His-382, His-555, Asn-559, and Ile-685.

It belongs to the lipoxygenase family. In terms of assembly, monomer. Fe cation serves as cofactor.

It localises to the periplasm. It carries out the reaction (9Z,12Z)-octadecadienoate + O2 = (9S)-hydroperoxy-(10E,12Z)-octadecadienoate. The catalysed reaction is (9Z)-octadecenoate + O2 = (8E,10S)-10-hydroperoxy-octadeca-8-enoate. The enzyme catalyses (9Z,12Z)-octadecadienoate + O2 = (8E,10S,12Z)-10-hydroperoxyoctadeca-8,12-dienoate. It catalyses the reaction (9Z,12Z,15Z)-octadecatrienoate + O2 = (8E,10S,12Z,15Z)-10-hydroperoxyoctadeca-8,12,15-trienoate. It carries out the reaction (9Z,12Z)-octadecadienoate + O2 = (13S)-hydroperoxy-(9Z,11E)-octadecadienoate. The catalysed reaction is (9Z,12Z,15Z)-octadecatrienoate + O2 = (13S)-hydroperoxy-(9Z,11E,15Z)-octadecatrienoate. Inhibited by Ba(2+), Zn(2+) and Fe(3+). Functionally, in presence of oxygen, converts linoleate into (9S)-hydroperoxy-10,12-octadecenoate (9HPOD), which spontaneously decomposes to the corresponding 9-hydroxy-10,12-octadecenoate (9HOD), and into 13-hydroperoxy-9,11-octadecenoate (13HPOD) which spontaneously decomposes to the corresponding 13-hydroxy-9,11-octadecenoate (13HOD). Also active on linolenate. To a lesser extent, is also able to convert oleate into (10S)-hydroperoxy-8E-octadecenoate, which spontaneously decomposes to the corresponding 10-hydroxy-8E-octadecenoate. Is almost not active on arachidonate. The chain is Linoleate 9/13-lipoxygenase (lox) from Pseudomonas aeruginosa.